Here is a 115-residue protein sequence, read N- to C-terminus: Large ribosomal subunit protein bL19 (115 aa).

The protein belongs to the bacterial ribosomal protein bL19 family.

In terms of biological role, this protein is located at the 30S-50S ribosomal subunit interface and may play a role in the structure and function of the aminoacyl-tRNA binding site. The chain is Large ribosomal subunit protein bL19 from Buchnera aphidicola subsp. Schizaphis graminum (strain Sg).